The following is an 846-amino-acid chain: Aminopeptidase N (846 aa).

Substrate contacts are provided by residues glutamate 120 and 252–256 (GAMEN). A Zn(2+)-binding site is contributed by histidine 288. Glutamate 289 acts as the Proton acceptor in catalysis. Zn(2+) contacts are provided by histidine 292 and glutamate 311.

This sequence belongs to the peptidase M1 family. As to quaternary structure, monomer. Zn(2+) is required as a cofactor.

The protein localises to the cytoplasm. It catalyses the reaction Release of an N-terminal amino acid, Xaa-|-Yaa- from a peptide, amide or arylamide. Xaa is preferably Ala, but may be most amino acids including Pro (slow action). When a terminal hydrophobic residue is followed by a prolyl residue, the two may be released as an intact Xaa-Pro dipeptide.. Functionally, aminopeptidase with broad substrate specificity to several peptides. It has more affinity for oligopeptides than for dipeptides. It plays an essential role in the metabolism, it may be involved in nitrogen supply or protein turnover. The protein is Aminopeptidase N (pepN) of Lactococcus lactis subsp. cremoris (strain MG1363).